We begin with the raw amino-acid sequence, 149 residues long: Putative pre-16S rRNA nuclease (149 aa).

Belongs to the YqgF nuclease family.

The protein localises to the cytoplasm. Its function is as follows. Could be a nuclease involved in processing of the 5'-end of pre-16S rRNA. The protein is Putative pre-16S rRNA nuclease of Burkholderia lata (strain ATCC 17760 / DSM 23089 / LMG 22485 / NCIMB 9086 / R18194 / 383).